The chain runs to 141 residues: 3-hydroxyacyl-[acyl-carrier-protein] dehydratase FabZ (141 aa).

Histidine 47 is a catalytic residue.

This sequence belongs to the thioester dehydratase family. FabZ subfamily.

The protein resides in the cytoplasm. It catalyses the reaction a (3R)-hydroxyacyl-[ACP] = a (2E)-enoyl-[ACP] + H2O. In terms of biological role, involved in unsaturated fatty acids biosynthesis. Catalyzes the dehydration of short chain beta-hydroxyacyl-ACPs and long chain saturated and unsaturated beta-hydroxyacyl-ACPs. The sequence is that of 3-hydroxyacyl-[acyl-carrier-protein] dehydratase FabZ from Caldanaerobacter subterraneus subsp. tengcongensis (strain DSM 15242 / JCM 11007 / NBRC 100824 / MB4) (Thermoanaerobacter tengcongensis).